A 234-amino-acid chain; its full sequence is (5-formylfuran-3-yl)methyl phosphate synthase (234 aa).

The active-site Schiff-base intermediate with substrate is Lys27. Lys85 functions as the Proton acceptor in the catalytic mechanism.

It belongs to the MfnB family.

It carries out the reaction 2 D-glyceraldehyde 3-phosphate = 4-(hydroxymethyl)-2-furancarboxaldehyde phosphate + phosphate + 2 H2O. The protein operates within cofactor biosynthesis; methanofuran biosynthesis. Its function is as follows. Catalyzes the formation of 4-(hydroxymethyl)-2-furancarboxaldehyde phosphate (4-HFC-P) from two molecules of glyceraldehyde-3-P (GA-3-P). The chain is (5-formylfuran-3-yl)methyl phosphate synthase from Methanosarcina acetivorans (strain ATCC 35395 / DSM 2834 / JCM 12185 / C2A).